The sequence spans 473 residues: Photosystem II CP43 reaction center protein (473 aa).

A propeptide spanning residues 1–14 (MKILYSPRRFYPVE) is cleaved from the precursor. Thr-15 bears the N-acetylthreonine mark. Thr-15 carries the post-translational modification Phosphothreonine. The next 5 helical transmembrane spans lie at 69-93 (LFEVAHFVPEKPMYEQGLILLPHLA), 134-155 (IIGPETLEESFPFFGYAWKDKN), 178-200 (KALYFGGVYDTWAPGGGDVRKIT), 255-275 (KPFAWARRAFVWSGEAYLSYS), and 291-312 (WFNNTAYPSEFYGPTGPEASQA). Glu-367 provides a ligand contact to [CaMn4O5] cluster. Residues 447–471 (RARAAAAGFEKGIDRDFEPVLSTTP) traverse the membrane as a helical segment.

This sequence belongs to the PsbB/PsbC family. PsbC subfamily. In terms of assembly, PSII is composed of 1 copy each of membrane proteins PsbA, PsbB, PsbC, PsbD, PsbE, PsbF, PsbH, PsbI, PsbJ, PsbK, PsbL, PsbM, PsbT, PsbX, PsbY, PsbZ, Psb30/Ycf12, at least 3 peripheral proteins of the oxygen-evolving complex and a large number of cofactors. It forms dimeric complexes. It depends on Binds multiple chlorophylls and provides some of the ligands for the Ca-4Mn-5O cluster of the oxygen-evolving complex. It may also provide a ligand for a Cl- that is required for oxygen evolution. PSII binds additional chlorophylls, carotenoids and specific lipids. as a cofactor.

It is found in the plastid. The protein resides in the chloroplast thylakoid membrane. In terms of biological role, one of the components of the core complex of photosystem II (PSII). It binds chlorophyll and helps catalyze the primary light-induced photochemical processes of PSII. PSII is a light-driven water:plastoquinone oxidoreductase, using light energy to abstract electrons from H(2)O, generating O(2) and a proton gradient subsequently used for ATP formation. This is Photosystem II CP43 reaction center protein from Huperzia lucidula (Shining clubmoss).